We begin with the raw amino-acid sequence, 224 residues long: Ribonuclease HII (224 aa).

One can recognise an RNase H type-2 domain in the interval 1 to 210 (MKIGGIDEAG…VRKIEESIKA (210 aa)). The a divalent metal cation site is built by Asp7, Glu8, and Asp105.

Belongs to the RNase HII family. Mn(2+) is required as a cofactor. The cofactor is Mg(2+).

It is found in the cytoplasm. It carries out the reaction Endonucleolytic cleavage to 5'-phosphomonoester.. Endonuclease that specifically degrades the RNA of RNA-DNA hybrids. The protein is Ribonuclease HII of Pyrococcus furiosus (strain ATCC 43587 / DSM 3638 / JCM 8422 / Vc1).